We begin with the raw amino-acid sequence, 335 residues long: Acetyl-coenzyme A carboxylase carboxyl transferase subunit alpha (335 aa).

Residues 48–308 (VLESKVDALR…KSLLVEELRM (261 aa)) form the CoA carboxyltransferase C-terminal domain.

This sequence belongs to the AccA family. In terms of assembly, acetyl-CoA carboxylase is a heterohexamer composed of biotin carboxyl carrier protein (AccB), biotin carboxylase (AccC) and two subunits each of ACCase subunit alpha (AccA) and ACCase subunit beta (AccD).

The protein resides in the cytoplasm. It carries out the reaction N(6)-carboxybiotinyl-L-lysyl-[protein] + acetyl-CoA = N(6)-biotinyl-L-lysyl-[protein] + malonyl-CoA. Its pathway is lipid metabolism; malonyl-CoA biosynthesis; malonyl-CoA from acetyl-CoA: step 1/1. Component of the acetyl coenzyme A carboxylase (ACC) complex. First, biotin carboxylase catalyzes the carboxylation of biotin on its carrier protein (BCCP) and then the CO(2) group is transferred by the carboxyltransferase to acetyl-CoA to form malonyl-CoA. This is Acetyl-coenzyme A carboxylase carboxyl transferase subunit alpha from Chlorobium phaeobacteroides (strain BS1).